The primary structure comprises 371 residues: Chaperone protein DnaJ (371 aa).

The 66-residue stretch at 5-70 folds into the J domain; it reads SYYDILGVSK…KKRQAYDQFG (66 aa). A CR-type zinc finger spans residues 139 to 217; the sequence is GREYKIEIPR…CGGQGLQEKR (79 aa). Zn(2+)-binding residues include C152, C155, C169, C172, C191, C194, C205, and C208. CXXCXGXG motif repeat units lie at residues 152–159, 169–176, 191–198, and 205–212; these read CGDCNGSG, CPDCGGSG, CPTCRGKG, and CKTCGGQG.

Belongs to the DnaJ family. Homodimer. Zn(2+) serves as cofactor.

It is found in the cytoplasm. Participates actively in the response to hyperosmotic and heat shock by preventing the aggregation of stress-denatured proteins and by disaggregating proteins, also in an autonomous, DnaK-independent fashion. Unfolded proteins bind initially to DnaJ; upon interaction with the DnaJ-bound protein, DnaK hydrolyzes its bound ATP, resulting in the formation of a stable complex. GrpE releases ADP from DnaK; ATP binding to DnaK triggers the release of the substrate protein, thus completing the reaction cycle. Several rounds of ATP-dependent interactions between DnaJ, DnaK and GrpE are required for fully efficient folding. Also involved, together with DnaK and GrpE, in the DNA replication of plasmids through activation of initiation proteins. This is Chaperone protein DnaJ from Leptospira borgpetersenii serovar Hardjo-bovis (strain JB197).